Here is a 457-residue protein sequence, read N- to C-terminus: Methylphosphonate synthase (457 aa).

In terms of domain architecture, HTH cro/C1-type 1 spans 23–74 (ILNDIKRRPEDAANELGVSIEEINSIISGKQKISPSLIEKAVNIWPVNERDF). Residues 32–50 (EDAANELGVSIEEINSIIS) constitute a DNA-binding region (H-T-H motif). Residues H148 and H190 each contribute to the Fe cation site. The region spanning 247–301 (LEYYFELSNLTKEKFAKRTNFSMETLADFFTKKKLPTFDELKIIAKALNVNSRDL) is the HTH cro/C1-type 2 domain. The segment at residues 258-277 (KEKFAKRTNFSMETLADFFT) is a DNA-binding region (H-T-H motif).

The protein belongs to the non-heme iron-dependent dioxygenase family. Requires Fe(2+) as cofactor.

The enzyme catalyses 2-hydroxyethylphosphonate + O2 = methylphosphonate + hydrogencarbonate + H(+). Its pathway is phosphorus metabolism; phosphonate biosynthesis. Its function is as follows. Catalyzes the conversion of 2-hydroxyethylphosphonate into methylphosphonate in the methylphosphonate biosynthesis pathway. The polypeptide is Methylphosphonate synthase (mpnS) (Nitrosopumilus maritimus (strain SCM1)).